A 444-amino-acid chain; its full sequence is Ribitol-5-phosphate xylosyltransferase 1 (444 aa).

Residues 1-9 are Cytoplasmic-facing; the sequence is MRLTRTRLC. A helical; Signal-anchor for type II membrane protein membrane pass occupies residues 10–30; the sequence is SLLVALYCLFSIYAAYHVFFG. Topologically, residues 31–444 are extracellular; the sequence is RRRRPLGTTS…ESSFFINNKV (414 aa). Residues 38–79 form a disordered region; that stretch reads TTSRNSRKAAAAQAKERRGREQSALESEEWNPWEGDEKNEQR. The span at 51 to 60 shows a compositional bias: basic and acidic residues; that stretch reads AKERRGREQS.

It belongs to the RXYLT1 family. Forms a complex composed of FKTN/fukutin, FKRP and RXYLT1/TMEM5.

It localises to the golgi apparatus membrane. It carries out the reaction 3-O-[Rib-ol-P-Rib-ol-P-3-beta-D-GalNAc-(1-&gt;3)-beta-D-GlcNAc-(1-&gt;4)-(O-6-P-alpha-D-Man)]-Thr-[protein] + UDP-alpha-D-xylose = 3-O-[beta-D-Xyl-(1-&gt;4)-Rib-ol-P-Rib-ol-P-3-beta-D-GalNAc-(1-&gt;3)-beta-D-GlcNAc-(1-&gt;4)-(O-6-P-alpha-D-Man)]-Thr-[protein] + UDP + H(+). Its pathway is protein modification; protein glycosylation. Acts as a UDP-D-xylose:ribitol-5-phosphate beta1,4-xylosyltransferase, which catalyzes the transfer of UDP-D-xylose to ribitol 5-phosphate (Rbo5P) to form the Xylbeta1-4Rbo5P linkage on O-mannosyl glycan. Participates in the biosynthesis of the phosphorylated O-mannosyl trisaccharide (N-acetylgalactosamine-beta-3-N-acetylglucosamine-beta-4-(phosphate-6-)mannose), a carbohydrate structure present in alpha-dystroglycan (DAG1), which is required for binding laminin G-like domain-containing extracellular proteins with high affinity. In Mus musculus (Mouse), this protein is Ribitol-5-phosphate xylosyltransferase 1.